Reading from the N-terminus, the 1162-residue chain is Lysine-specific demethylase 2A (1162 aa).

At S28 the chain carries Phosphoserine. One can recognise a JmjC domain in the interval 148 to 316 (FSHTRLENMV…MQLKIYNIED (169 aa)). Residue T209 participates in substrate binding. Fe cation is bound by residues H212 and D214. K229 contributes to the substrate binding site. Position 284 (H284) interacts with Fe cation. Positions 367–389 (GLESGNGDEEAVDREPRRLSSRR) are disordered. Phosphoserine is present on residues S390 and S394. K505 participates in a covalent cross-link: Glycyl lysine isopeptide (Lys-Gly) (interchain with G-Cter in SUMO2). The tract at residues 532-557 (VPTIPITKPHTMKPAPRLTPVRPAAA) is disordered. A Phosphothreonine modification is found at T550. S558 carries the phosphoserine modification. The CXXC-type zinc finger occupies 564–610 (ARRRRVRCRKCKACVQGECGVCHYCRDMKKFGGPGRMKQSCVLRQCL). Zn(2+)-binding residues include C571, C574, C577, C582, C585, C588, C604, C609, C620, and C623. Residues 617-678 (SVTCSLCGEV…CWECPKCYQE (62 aa)) form a PHD-type zinc finger. A Phosphothreonine modification is found at T632. Residues C642, C645, H650, C653, C672, and C675 each coordinate Zn(2+). S692 is modified (phosphoserine). The interval 704 to 789 (PLRSCDEPLT…PSGKKELSEV (86 aa)) is disordered. Residue T713 is modified to Phosphothreonine. S718 and S731 each carry phosphoserine. 2 stretches are compositionally biased toward basic and acidic residues: residues 746–757 (SDHHSASRDERF) and 771–789 (TMVREKENNPSGKKELSEV). 4 positions are modified to phosphoserine: S825, S832, S869, and S883. Residues 839-887 (HCPARTPQRGDEEGLGGEEEEEEEEEEEDDSAEEGGAARLNGRGSWAQD) form a disordered region. A compositionally biased stretch (acidic residues) spans 851 to 871 (EGLGGEEEEEEEEEEEDDSAE). The 48-residue stretch at 889 to 936 (DESWMQREVWMSVFRYLSRRELCECMRVCKTWYKWCCDKRLWTKIDLS) folds into the F-box domain. LRR repeat units follow at residues 961–982 (WTNISKKQLTWLVNRLPGLKDL) and 984–1010 (LAGCSWSAVSALSTSSCPLLRTLDLRW). R1020 bears the ADP-ribosylarginine mark. LRR repeat units lie at residues 1048 to 1073 (GLDITDATLRLIIRHMPLLSRLDLSH), 1074 to 1103 (CSHLTDQSSNLLTAVGSSTRYSLTELNMAG), 1104 to 1128 (CNKLTDQTLIYLRRIANVTLIDLRG), and 1129 to 1156 (CKQITRKACEHFISDLSINSLYCLSDEK).

Belongs to the JHDM1 histone demethylase family. As to quaternary structure, interacts with CBX5/HP1A; the interaction promotes CBX5 localization to chromatin. The SKP1-KDM2A complex interacts with UBB. Part of a SCF (SKP1-cullin-F-box) protein ligase complex. The cofactor is Fe(2+). In terms of processing, mono-ADP-ribosylated at Arg-1020 in response to DNA damage, leading to displacement from chromatin, resulting in increased dimethylation of histone H3 at 'Lys-36'. Widely expressed, with highest levels in brain, testis and ovary, followed by lung.

The protein localises to the nucleus. Its subcellular location is the nucleoplasm. It is found in the chromosome. It carries out the reaction N(6),N(6)-dimethyl-L-lysyl(36)-[histone H3] + 2 2-oxoglutarate + 2 O2 = L-lysyl(36)-[histone H3] + 2 formaldehyde + 2 succinate + 2 CO2. Functionally, histone demethylase that specifically demethylates 'Lys-36' of histone H3, thereby playing a central role in histone code. Preferentially demethylates dimethylated H3 'Lys-36' residue while it has weak or no activity for mono- and tri-methylated H3 'Lys-36'. May also recognize and bind to some phosphorylated proteins and promote their ubiquitination and degradation. Required to maintain the heterochromatic state. Associates with centromeres and represses transcription of small non-coding RNAs that are encoded by the clusters of satellite repeats at the centromere. Required to sustain centromeric integrity and genomic stability, particularly during mitosis. Regulates circadian gene expression by repressing the transcriptional activator activity of CLOCK-BMAL1 heterodimer and RORA in a catalytically-independent manner. This Homo sapiens (Human) protein is Lysine-specific demethylase 2A (KDM2A).